Consider the following 495-residue polypeptide: Probable cytosol aminopeptidase (495 aa).

Mn(2+) contacts are provided by Lys264 and Asp269. Residue Lys276 is part of the active site. Asp287, Asp346, and Glu348 together coordinate Mn(2+). Arg350 is an active-site residue.

It belongs to the peptidase M17 family. It depends on Mn(2+) as a cofactor.

The protein resides in the cytoplasm. It carries out the reaction Release of an N-terminal amino acid, Xaa-|-Yaa-, in which Xaa is preferably Leu, but may be other amino acids including Pro although not Arg or Lys, and Yaa may be Pro. Amino acid amides and methyl esters are also readily hydrolyzed, but rates on arylamides are exceedingly low.. The enzyme catalyses Release of an N-terminal amino acid, preferentially leucine, but not glutamic or aspartic acids.. Functionally, presumably involved in the processing and regular turnover of intracellular proteins. Catalyzes the removal of unsubstituted N-terminal amino acids from various peptides. This chain is Probable cytosol aminopeptidase, found in Geotalea uraniireducens (strain Rf4) (Geobacter uraniireducens).